We begin with the raw amino-acid sequence, 288 residues long: Diaminopimelate epimerase (288 aa).

Substrate contacts are provided by asparagine 13, glutamine 51, and asparagine 71. Catalysis depends on cysteine 80, which acts as the Proton donor. Substrate-binding positions include 81–82, asparagine 166, asparagine 200, and 218–219; these read GN and ER. Cysteine 227 serves as the catalytic Proton acceptor. 228–229 provides a ligand contact to substrate; sequence GT.

It belongs to the diaminopimelate epimerase family. As to quaternary structure, homodimer.

It is found in the cytoplasm. It carries out the reaction (2S,6S)-2,6-diaminopimelate = meso-2,6-diaminopimelate. The protein operates within amino-acid biosynthesis; L-lysine biosynthesis via DAP pathway; DL-2,6-diaminopimelate from LL-2,6-diaminopimelate: step 1/1. In terms of biological role, catalyzes the stereoinversion of LL-2,6-diaminopimelate (L,L-DAP) to meso-diaminopimelate (meso-DAP), a precursor of L-lysine and an essential component of the bacterial peptidoglycan. In Caulobacter vibrioides (strain ATCC 19089 / CIP 103742 / CB 15) (Caulobacter crescentus), this protein is Diaminopimelate epimerase.